The primary structure comprises 481 residues: Coniferyl aldehyde dehydrogenase (481 aa).

Residues Glu221 and Cys255 contribute to the active site.

The protein belongs to the aldehyde dehydrogenase family. As to quaternary structure, homodimer.

The enzyme catalyses (E)-coniferaldehyde + NADP(+) + H2O = (E)-ferulate + NADPH + 2 H(+). It carries out the reaction (E)-coniferaldehyde + NAD(+) + H2O = (E)-ferulate + NADH + 2 H(+). Its function is as follows. Catalyzes the NAD(+)-dependent oxidation of coniferyl aldehyde to ferulic acid and which is induced during growth with eugenol as the carbon source. This Pseudomonas sp. (strain HR199 / DSM 7063) protein is Coniferyl aldehyde dehydrogenase (calB).